Reading from the N-terminus, the 473-residue chain is Cannabinoid receptor 1 (473 aa).

Topologically, residues 1–121 are extracellular; the sequence is MKSILDGLAD…LNPSQQLAIA (121 aa). The interval 2–23 is required for mitochondrial localization; the sequence is KSILDGLADTTFRTITTDLLYV. Residues asparagine 78 and asparagine 84 are each glycosylated (N-linked (GlcNAc...) asparagine). The chain crosses the membrane as a helical span at residues 122-142; the sequence is VLSLTLGTFTVLENLLVLCVI. Over 143 to 155 the chain is Cytoplasmic; that stretch reads LHSRSLRCRPSYH. The chain crosses the membrane as a helical span at residues 156 to 176; that stretch reads FIGSLAVADLLGSVIFVYSFV. At 177 to 188 the chain is on the extracellular side; the sequence is DFHVFHRKDSPN. The chain crosses the membrane as a helical span at residues 189-209; it reads VFLFKLGGVTASFTASVGSLF. The Cytoplasmic portion of the chain corresponds to 210–233; sequence LTAIDRYISIHRPLAYKRIVTRPK. A helical membrane pass occupies residues 234-254; that stretch reads AVVAFCLMWTIAIVIAVLPLL. Residues 255-278 are Extracellular-facing; the sequence is GWNCKKLQSVCSDIFPLIDETYLM. The chain crosses the membrane as a helical span at residues 279 to 299; sequence FWIGVTSVLLLFIVYAYMYIL. Residues 300–345 are Cytoplasmic-facing; the sequence is WKAHSHAVRMIQRGTQKSIIIHTSEDGKVQVTRPDQARMDIRLAKT. The helical transmembrane segment at 346-366 threads the bilayer; that stretch reads LVLILVVLIICWGPLLAIMVY. Over 367-378 the chain is Extracellular; the sequence is DVFGKMNKLIKT. A helical transmembrane segment spans residues 379-399; the sequence is VFAFCSMLCLLNSTVNPIIYA. Residues 400 to 473 lie on the Cytoplasmic side of the membrane; that stretch reads LRSKDLRHAF…VSTDTSAEAL (74 aa). Cysteine 416 carries S-palmitoyl cysteine lipidation. A phosphoserine mark is found at serine 426 and serine 430.

It belongs to the G-protein coupled receptor 1 family. In terms of assembly, interacts (via C-terminus) with CNRIP1. Associates with G protein alpha subunits, including G(i) alpha-1/GNAI1, G(i) alpha-3/GNAI3 and G(o)-alpha/GNAO1; palmitoylation is important for interaction with GNAI3 and GNAO1. Post-translationally, palmitoylation at Cys-416 is important for recruitment at both plasma membrane and lipid rafts and association with G protein alpha subunits. In terms of tissue distribution, expressed in brain neurons (at protein level). Detected throughout the striatum, cortex and hippocampus, with highest levels in the lateral striatum. In rostral brain regions, high expression levels in the dorsal lateral striatum, while in the caudal brain regions, high levels are observed in the ventral lateral striatum. Expressed in neurons. In the hypothalamus, expressed in both GABAergic and glutamatergic presynaptic terminals of POMC neurons (at protein level). Expressed in striated muscles, including skeletal muscles (gastrocnemius and rectus abdominis) and myocardium (at protein level). Expressed in the liver, with highest levels in Kupffer cells and lower levels in endothelial cells as well as hepatocytes, particularly in perivascular areas (at protein level). The hepatic expression level is up-regulated in obese mice compared to lean animals.

It is found in the cell membrane. Its subcellular location is the mitochondrion outer membrane. It localises to the cell projection. The protein localises to the axon. The protein resides in the presynapse. With respect to regulation, hemopressin, a peptide derived from hemoglobin subunit alpha (HBA1 and/or HBA2), acts as an antagonist peptide: hemopressin-binding efficiently blocks cannabinoid receptor CNR1 and subsequent signaling. In terms of biological role, G-protein coupled receptor for cannabinoids, including endocannabinoids (eCBs), such as N-arachidonoylethanolamide (also called anandamide or AEA) and 2-arachidonoylglycerol (2-AG). Mediates many cannabinoid-induced effects, acting, among others, on food intake, memory loss, gastrointestinal motility, catalepsy, ambulatory activity, anxiety, chronic pain. Signaling typically involves reduction in cyclic AMP. In the hypothalamus, may have a dual effect on mitochondrial respiration depending upon the agonist dose and possibly upon the cell type. Increases respiration at low doses, while decreases respiration at high doses. At high doses, CNR1 signal transduction involves G-protein alpha-i protein activation and subsequent inhibition of mitochondrial soluble adenylate cyclase, decrease in cyclic AMP concentration, inhibition of protein kinase A (PKA)-dependent phosphorylation of specific subunits of the mitochondrial electron transport system, including NDUFS2. In the hypothalamus, inhibits leptin-induced reactive oxygen species (ROS) formation and mediates cannabinoid-induced increase in SREBF1 and FASN gene expression. In response to cannabinoids, drives the release of orexigenic beta-endorphin, but not that of melanocyte-stimulating hormone alpha/alpha-MSH, from hypothalamic POMC neurons, hence promoting food intake. In the hippocampus, regulates cellular respiration and energy production in response to cannabinoids. Involved in cannabinoid-dependent depolarization-induced suppression of inhibition (DSI), a process in which depolarization of CA1 postsynaptic pyramidal neurons mobilizes eCBs, which retrogradely activate presynaptic CB1 receptors, transiently decreasing GABAergic inhibitory neurotransmission. Also reduces excitatory synaptic transmission. In superior cervical ganglions and cerebral vascular smooth muscle cells, inhibits voltage-gated Ca(2+) channels in a constitutive, as well as agonist-dependent manner. In cerebral vascular smooth muscle cells, cannabinoid-induced inhibition of voltage-gated Ca(2+) channels leads to vasodilation and decreased vascular tone. Induces leptin production in adipocytes and reduces LRP2-mediated leptin clearance in the kidney, hence participating in hyperleptinemia. In adipose tissue, CNR1 signaling leads to increased expression of SREBF1, ACACA and FASN genes. In the liver, activation by endocannabinoids leads to increased de novo lipogenesis and reduced fatty acid catabolism, associated with increased expression of SREBF1/SREBP-1, GCK, ACACA, ACACB and FASN genes. May also affect de novo cholesterol synthesis and HDL-cholesteryl ether uptake. Peripherally modulates energy metabolism. In high carbohydrate diet-induced obesity, may decrease the expression of mitochondrial dihydrolipoyl dehydrogenase/DLD in striated muscles, as well as that of selected glucose/ pyruvate metabolic enzymes, hence affecting energy expenditure through mitochondrial metabolism. In response to cannabinoid anandamide, elicits a pro-inflammatory response in macrophages, which involves NLRP3 inflammasome activation and IL1B and IL18 secretion. In macrophages infiltrating pancreatic islets, this process may participate in the progression of type-2 diabetes and associated loss of pancreatic beta-cells. This chain is Cannabinoid receptor 1 (Cnr1), found in Mus musculus (Mouse).